Consider the following 342-residue polypeptide: Porphobilinogen deaminase (342 aa).

Residue Cys-249 is modified to S-(dipyrrolylmethanemethyl)cysteine. Residues 323-342 (AAAKQGAAEDGAADSAATGE) form a disordered region.

The protein belongs to the HMBS family. Monomer. Requires dipyrromethane as cofactor.

It catalyses the reaction 4 porphobilinogen + H2O = hydroxymethylbilane + 4 NH4(+). The protein operates within porphyrin-containing compound metabolism; protoporphyrin-IX biosynthesis; coproporphyrinogen-III from 5-aminolevulinate: step 2/4. Tetrapolymerization of the monopyrrole PBG into the hydroxymethylbilane pre-uroporphyrinogen in several discrete steps. This is Porphobilinogen deaminase from Paraburkholderia phytofirmans (strain DSM 17436 / LMG 22146 / PsJN) (Burkholderia phytofirmans).